We begin with the raw amino-acid sequence, 641 residues long: Bifunctional protein glk (641 aa).

The interval 1-21 is disordered; it reads MSTGAQTKAAEASQHADGPRL. The segment at 1 to 340 is glucokinase; the sequence is MSTGAQTKAA…QLSNRTGGAS (340 aa). 23–28 contributes to the ATP binding site; that stretch reads ADVGGT. Positions 341–417 constitute an HTH rpiR-type domain; it reads SAVFERIRQM…LKLATGLTGT (77 aa). The interval 341-641 is putative HTH-type transcriptional regulator; it reads SAVFERIRQM…SHGAAPAAKE (301 aa). The H-T-H motif DNA-binding region spans 377–396; it reads IVDIARKADVSQPTVIRFCR. An SIS domain is found at 461–600; it reads AIDILNNARR…AVGVAIRRAS (140 aa). Residues 576-596 traverse the membrane as a helical segment; sequence SMISRILHLVMIDILAVGVAI.

This sequence in the N-terminal section; belongs to the bacterial glucokinase family.

It localises to the membrane. The catalysed reaction is D-glucose + ATP = D-glucose 6-phosphate + ADP + H(+). The polypeptide is Bifunctional protein glk (glk) (Burkholderia thailandensis (strain ATCC 700388 / DSM 13276 / CCUG 48851 / CIP 106301 / E264)).